The sequence spans 85 residues: Putative septation protein SpoVG (85 aa).

This sequence belongs to the SpoVG family.

Functionally, could be involved in septation. This Archaeoglobus fulgidus (strain ATCC 49558 / DSM 4304 / JCM 9628 / NBRC 100126 / VC-16) protein is Putative septation protein SpoVG.